Consider the following 308-residue polypeptide: HPr kinase/phosphorylase (308 aa).

Active-site residues include H138 and K159. 153–160 (GESGLGKS) provides a ligand contact to ATP. S160 serves as a coordination point for Mg(2+). The active-site Proton acceptor; for phosphorylation activity. Proton donor; for dephosphorylation activity is D177. The segment at 201–210 (LEVRGLGLLD) is important for the catalytic mechanism of both phosphorylation and dephosphorylation. E202 serves as a coordination point for Mg(2+). Residue R243 is part of the active site. Residues 264-269 (QVAAGR) are important for the catalytic mechanism of dephosphorylation.

It belongs to the HPrK/P family. As to quaternary structure, homohexamer. Requires Mg(2+) as cofactor.

It catalyses the reaction [HPr protein]-L-serine + ATP = [HPr protein]-O-phospho-L-serine + ADP + H(+). It carries out the reaction [HPr protein]-O-phospho-L-serine + phosphate + H(+) = [HPr protein]-L-serine + diphosphate. Catalyzes the ATP- as well as the pyrophosphate-dependent phosphorylation of a specific serine residue in HPr, a phosphocarrier protein of the phosphoenolpyruvate-dependent sugar phosphotransferase system (PTS). HprK/P also catalyzes the pyrophosphate-producing, inorganic phosphate-dependent dephosphorylation (phosphorolysis) of seryl-phosphorylated HPr (P-Ser-HPr). The sequence is that of HPr kinase/phosphorylase from Bordetella avium (strain 197N).